A 207-amino-acid polypeptide reads, in one-letter code: MTSVALFKQDGSQNGTVELNDSVFSVEANESAEFDAILRQRASLRQGTHAVKNRSAVRGGGKKPWRQKGTGRARQGSIRAPQFRGGGIVFGPTPRSYNYALPRKVRQLAIKSALSQKVANDKFVVVDGLNFDAPKTKEFAGVMNNLKVSERVLVVVTDEDKNAQLSARNLPKTTVVTPAGVNILNVVDAQKIIITQSALSQVEEVLA.

The tract at residues 52-75 is disordered; it reads KNRSAVRGGGKKPWRQKGTGRARQ. Residues 60–71 show a composition bias toward basic residues; that stretch reads GGKKPWRQKGTG.

Belongs to the universal ribosomal protein uL4 family. As to quaternary structure, part of the 50S ribosomal subunit.

Its function is as follows. One of the primary rRNA binding proteins, this protein initially binds near the 5'-end of the 23S rRNA. It is important during the early stages of 50S assembly. It makes multiple contacts with different domains of the 23S rRNA in the assembled 50S subunit and ribosome. Forms part of the polypeptide exit tunnel. The protein is Large ribosomal subunit protein uL4 of Limosilactobacillus fermentum (strain NBRC 3956 / LMG 18251) (Lactobacillus fermentum).